The sequence spans 285 residues: ATP synthase gamma chain (285 aa).

Belongs to the ATPase gamma chain family. In terms of assembly, F-type ATPases have 2 components, CF(1) - the catalytic core - and CF(0) - the membrane proton channel. CF(1) has five subunits: alpha(3), beta(3), gamma(1), delta(1), epsilon(1). CF(0) has three main subunits: a, b and c.

Its subcellular location is the cell membrane. In terms of biological role, produces ATP from ADP in the presence of a proton gradient across the membrane. The gamma chain is believed to be important in regulating ATPase activity and the flow of protons through the CF(0) complex. The protein is ATP synthase gamma chain of Clostridium novyi (strain NT).